Consider the following 316-residue polypeptide: IDS-like terpene synthase 2 (316 aa).

Mg(2+) is bound by residues Asp69 and Asp73.

The protein belongs to the FPP/GGPP synthase family. Requires Mg(2+) as cofactor.

It catalyses the reaction (2E)-geranyl diphosphate + H2O = linalool + diphosphate. The catalysed reaction is (2E,6E)-farnesyl diphosphate + H2O = (6E)-nerolidol + diphosphate. Its function is as follows. Terpene synthase that shows monoterpene synthase activity and produces linalool, using geranyl diphosphate (GPP) as substrate. Also shows sesquiterpene synthase activity as it is able to convert farnesyl diphosphate (FPP) into (E)-nerolidol. In Melampsora larici-populina (strain 98AG31 / pathotype 3-4-7) (Poplar leaf rust fungus), this protein is IDS-like terpene synthase 2.